We begin with the raw amino-acid sequence, 783 residues long: Putative ATP-dependent DNA helicase fml2 (783 aa).

In terms of domain architecture, Helicase ATP-binding spans phenylalanine 118–lysine 286. Leucine 131–threonine 138 provides a ligand contact to ATP. The short motif at aspartate 234–histidine 237 is the DEAH box element. Residues lysine 450 to valine 619 enclose the Helicase C-terminal domain.

The protein belongs to the DEAD box helicase family. DEAH subfamily. FANCM sub-subfamily.

The protein resides in the nucleus. The protein localises to the nucleolus. The catalysed reaction is ATP + H2O = ADP + phosphate + H(+). This Schizosaccharomyces pombe (strain 972 / ATCC 24843) (Fission yeast) protein is Putative ATP-dependent DNA helicase fml2.